We begin with the raw amino-acid sequence, 745 residues long: MTIPNSIPITPELVASHGLKPEEYDRILQLIGREPTFTELGIFSAMWNEHCSYKSSKRWLRTLPTTGARVIQGPGENAGVVDIDDGDCVVFKMESHNHPSYIEPYQGAATGVGGILRDVFTMGARPIAAMNALRFGAPDHPKTRHLVSGVVAGVGGYGNAFGVPTVGGEVEFDERYNGNILVNAFAAGLAKSDAIFLSEAKGVGLPVVYLGAKTGRDGVGGATMASAEFDESIEEKRPTVQVGDPFTEKCLLEACLELMKTGAVIAIQDMGAAGLTCSAVEMGAKGDLGIELDLDTVPVREENMTAYEMMLSESQERMLMVLEPSKEEVAKAIFVKWGLDFAIVGKTTDDLRFRILHQGEEVANLPIKDLGDQAPEYDRPWRESDKRGPLPANLVDEPADYRAAILSLVGSANQSSRRWVYEQYDTLIQGNSLQLPGGDAGVVRVENHPTKALAFSSDVTPRYVEADPFEGGKQAVAECWRNITATGAEPLAATDNLNFGNPEKPEIMGQLVEAIKGIGEACRALDFPIVSGNVSLYNETNGVAILPTPTIAGVGLLPDWSRMAKIGGAQDGDHVLLIGTDGTHLGSSIYLRDLLGRTDGPAPEVDLHAERRNGDFIRSAIRNGQVTACHDISSGGLGIALAEMAMASAKGLTIDLSESRGPAHALLFGEDQARYVVTVPADLANFICANAEGAGVPFRRLGKVGGDALVIDGVCTIAVEELRNTHESWFPNFMDGKAETLAAAQ.

The active site involves histidine 50. ATP-binding residues include tyrosine 53 and lysine 92. Glutamate 94 provides a ligand contact to Mg(2+). Residues 95-98 (SHNH) and arginine 117 each bind substrate. Catalysis depends on histidine 96, which acts as the Proton acceptor. Aspartate 118 lines the Mg(2+) pocket. A substrate-binding site is contributed by glutamine 241. Aspartate 269 provides a ligand contact to Mg(2+). Substrate is bound at residue 313–315 (ESQ). ATP-binding residues include aspartate 495 and glycine 532. Residue asparagine 533 coordinates Mg(2+). Serine 535 serves as a coordination point for substrate.

It belongs to the FGAMS family. Monomer. Part of the FGAM synthase complex composed of 1 PurL, 1 PurQ and 2 PurS subunits.

The protein localises to the cytoplasm. The enzyme catalyses N(2)-formyl-N(1)-(5-phospho-beta-D-ribosyl)glycinamide + L-glutamine + ATP + H2O = 2-formamido-N(1)-(5-O-phospho-beta-D-ribosyl)acetamidine + L-glutamate + ADP + phosphate + H(+). Its pathway is purine metabolism; IMP biosynthesis via de novo pathway; 5-amino-1-(5-phospho-D-ribosyl)imidazole from N(2)-formyl-N(1)-(5-phospho-D-ribosyl)glycinamide: step 1/2. In terms of biological role, part of the phosphoribosylformylglycinamidine synthase complex involved in the purines biosynthetic pathway. Catalyzes the ATP-dependent conversion of formylglycinamide ribonucleotide (FGAR) and glutamine to yield formylglycinamidine ribonucleotide (FGAM) and glutamate. The FGAM synthase complex is composed of three subunits. PurQ produces an ammonia molecule by converting glutamine to glutamate. PurL transfers the ammonia molecule to FGAR to form FGAM in an ATP-dependent manner. PurS interacts with PurQ and PurL and is thought to assist in the transfer of the ammonia molecule from PurQ to PurL. This chain is Phosphoribosylformylglycinamidine synthase subunit PurL, found in Allorhizobium ampelinum (strain ATCC BAA-846 / DSM 112012 / S4) (Agrobacterium vitis (strain S4)).